Reading from the N-terminus, the 364-residue chain is Metalloendoproteinase 1-MMP (364 aa).

An N-terminal signal peptide occupies residues 1-28; the sequence is MSRNLIYRRNRALCFVLILFCFPYRFGA. Positions 29–149 are cleaved as a propeptide — activation peptide; sequence RNTPEAEQST…NNDFLHTTAH (121 aa). An N-linked (GlcNAc...) asparagine glycan is attached at Asn-49. A Cysteine switch motif is present at residues 128–135; sequence PRCGVSDT. Cys-130 serves as a coordination point for Zn(2+). Asp-211 lines the Ca(2+) pocket. Zn(2+)-binding residues include His-221 and Asp-223. Ca(2+) contacts are provided by Asp-228 and Gly-229. Zn(2+) is bound at residue His-236. Gly-243 provides a ligand contact to Ca(2+). His-246 is a Zn(2+) binding site. Residues Asp-248 and Glu-251 each coordinate Ca(2+). Zn(2+) is bound at residue His-275. Glu-276 is a catalytic residue. Zn(2+)-binding residues include His-279 and His-285. An N-linked (GlcNAc...) asparagine glycan is attached at Asn-338. Gly-339 is lipidated: GPI-anchor amidated glycine. The propeptide at 340–364 is removed in mature form; that stretch reads TVSHRFLSGNFIGYVLLVVGLILFL.

Belongs to the peptidase M10A family. Matrix metalloproteinases (MMPs) subfamily. Requires Ca(2+) as cofactor. Zn(2+) serves as cofactor. In terms of tissue distribution, mostly expressed in flowers, roots and stems, and, to a lower extent, in leaves.

It is found in the cell membrane. Inhibited by human TIMP-1 and TIMP-2 and by the peptide hydroxamate inhibitor (BB-94). Repressed by acetohydroxamic acid (AHA). Matrix metalloproteinases (MMPs) or matrixins may play a role in the degradation and remodeling of the extracellular matrix (ECM) during development or in response to stresses. Can cleave myelin basic protein as well as fluorigenic peptide substrates, McaPLANvaDpaAR-NH(2) and McaPChaGNvaHADpa-NH(2) 4-fold more efficiently than McaPLGLDpaAR-NH(2) (QF24). Active on myelin basic protein (MBP) and, to some extent, on McaPLGLDpaAR-NH(2) (QF24) and beta-casein. The sequence is that of Metalloendoproteinase 1-MMP from Arabidopsis thaliana (Mouse-ear cress).